Consider the following 174-residue polypeptide: Crossover junction endodeoxyribonuclease RuvC (174 aa).

Catalysis depends on residues aspartate 8, glutamate 69, and aspartate 141. Mg(2+)-binding residues include aspartate 8, glutamate 69, and aspartate 141.

This sequence belongs to the RuvC family. Homodimer which binds Holliday junction (HJ) DNA. The HJ becomes 2-fold symmetrical on binding to RuvC with unstacked arms; it has a different conformation from HJ DNA in complex with RuvA. In the full resolvosome a probable DNA-RuvA(4)-RuvB(12)-RuvC(2) complex forms which resolves the HJ. It depends on Mg(2+) as a cofactor.

The protein localises to the cytoplasm. The catalysed reaction is Endonucleolytic cleavage at a junction such as a reciprocal single-stranded crossover between two homologous DNA duplexes (Holliday junction).. In terms of biological role, the RuvA-RuvB-RuvC complex processes Holliday junction (HJ) DNA during genetic recombination and DNA repair. Endonuclease that resolves HJ intermediates. Cleaves cruciform DNA by making single-stranded nicks across the HJ at symmetrical positions within the homologous arms, yielding a 5'-phosphate and a 3'-hydroxyl group; requires a central core of homology in the junction. The consensus cleavage sequence is 5'-(A/T)TT(C/G)-3'. Cleavage occurs on the 3'-side of the TT dinucleotide at the point of strand exchange. HJ branch migration catalyzed by RuvA-RuvB allows RuvC to scan DNA until it finds its consensus sequence, where it cleaves and resolves the cruciform DNA. The protein is Crossover junction endodeoxyribonuclease RuvC of Xanthomonas axonopodis pv. citri (strain 306).